Reading from the N-terminus, the 299-residue chain is GTPase Era (299 aa).

One can recognise an Era-type G domain in the interval 4 to 171; that stretch reads KSGFVAILGR…VDILSENLGE (168 aa). Residues 12–19 are G1; it reads GRPNVGKS. 12–19 is a binding site for GTP; that stretch reads GRPNVGKS. A G2 region spans residues 38 to 42; sequence QTTRN. The G3 stretch occupies residues 59-62; sequence DTPG. GTP-binding positions include 59-63 and 121-124; these read DTPGI and NKID. Residues 121 to 124 are G4; it reads NKID. Positions 150–152 are G5; it reads ISA. The 79-residue stretch at 202–280 folds into the KH type-2 domain; sequence TREEIPHSVA…FLETWVKVKK (79 aa).

This sequence belongs to the TRAFAC class TrmE-Era-EngA-EngB-Septin-like GTPase superfamily. Era GTPase family. As to quaternary structure, monomer.

Its subcellular location is the cytoplasm. The protein localises to the cell membrane. In terms of biological role, an essential GTPase that binds both GDP and GTP, with rapid nucleotide exchange. Plays a role in 16S rRNA processing and 30S ribosomal subunit biogenesis and possibly also in cell cycle regulation and energy metabolism. In Streptococcus pneumoniae (strain JJA), this protein is GTPase Era.